The sequence spans 244 residues: Sortase B (244 aa).

At 1 to 6 the chain is on the cytoplasmic side; it reads MRMKRF. Residues 7–24 form a helical membrane-spanning segment; the sequence is LTIVQILLVVIIIIFGYK. Topologically, residues 25–244 are extracellular; it reads IVQTYIEDKQ…VVVAKIIKVS (220 aa). Cysteine 223 serves as the catalytic Acyl-thioester intermediate.

This sequence belongs to the bacterial sortase family. Class B subfamily.

The protein resides in the cell membrane. It catalyses the reaction The enzyme catalyzes a cell wall sorting reaction in which a surface protein with a sorting signal containing a NPXTN motif is cleaved between the Thr and Asn residue. The resulting threonine carboxyl end of the protein is covalently attached to a pentaglycine cross-bridge of peptidoglycan.. Its activity is regulated as follows. Inhibited by MTSET (2-(Trimethylammonium)-ethyl-methanethiosulfonate) and E64 ([n- (l-3-trans-carboxyoxirane-2-carbonyl)-l-leucyl]-amido(4-guanido)butane). Inhibited by coptisine. Its function is as follows. Transpeptidase that anchors surface proteins to the cell wall. Recognizes and modifies its substrate by proteolytic cleavage of a C-terminal sorting signal. Following cleavage, a covalent intermediate is formed via a thioester bond between the sortase and its substrate, which is then transferred and covalently attached to the cell wall. This sortase recognizes an Asn-Pro-Gln-Thr-Asn (NPQTN) motif in IsdC, which is cleaved by the sortase between the threonine and aspargine residues; may only have 1 substrate in this bacterium. May be dedicated to the process of iron acquisition during bacterial infection. This chain is Sortase B, found in Staphylococcus aureus (strain NCTC 8325 / PS 47).